Reading from the N-terminus, the 255-residue chain is Hydroxyethylthiazole kinase (255 aa).

Position 38 (M38) interacts with substrate. The ATP site is built by R114 and T160. G187 serves as a coordination point for substrate.

Belongs to the Thz kinase family. The cofactor is Mg(2+).

The catalysed reaction is 5-(2-hydroxyethyl)-4-methylthiazole + ATP = 4-methyl-5-(2-phosphooxyethyl)-thiazole + ADP + H(+). Its pathway is cofactor biosynthesis; thiamine diphosphate biosynthesis; 4-methyl-5-(2-phosphoethyl)-thiazole from 5-(2-hydroxyethyl)-4-methylthiazole: step 1/1. Catalyzes the phosphorylation of the hydroxyl group of 4-methyl-5-beta-hydroxyethylthiazole (THZ). The chain is Hydroxyethylthiazole kinase from Lysinibacillus sphaericus (strain C3-41).